Reading from the N-terminus, the 329-residue chain is Probable fructokinase-2 (329 aa).

Belongs to the carbohydrate kinase PfkB family.

The catalysed reaction is D-fructose + ATP = D-fructose 6-phosphate + ADP + H(+). The protein operates within glycan biosynthesis; starch biosynthesis. May play an important role in maintaining the flux of carbon towards starch formation. This is Probable fructokinase-2 from Arabidopsis thaliana (Mouse-ear cress).